Reading from the N-terminus, the 342-residue chain is 4-hydroxy-3-methylbut-2-enyl diphosphate reductase (342 aa).

Cysteine 47 is a binding site for [4Fe-4S] cluster. Residues histidine 78 and histidine 111 each contribute to the (2E)-4-hydroxy-3-methylbut-2-enyl diphosphate site. Dimethylallyl diphosphate-binding residues include histidine 78 and histidine 111. Isopentenyl diphosphate is bound by residues histidine 78 and histidine 111. Residue cysteine 133 participates in [4Fe-4S] cluster binding. Histidine 161 serves as a coordination point for (2E)-4-hydroxy-3-methylbut-2-enyl diphosphate. Dimethylallyl diphosphate is bound at residue histidine 161. Residue histidine 161 participates in isopentenyl diphosphate binding. Glutamate 163 functions as the Proton donor in the catalytic mechanism. Residue threonine 201 coordinates (2E)-4-hydroxy-3-methylbut-2-enyl diphosphate. A [4Fe-4S] cluster-binding site is contributed by cysteine 231. The (2E)-4-hydroxy-3-methylbut-2-enyl diphosphate site is built by serine 259, serine 260, asparagine 261, and serine 303. Residues serine 259, serine 260, asparagine 261, and serine 303 each coordinate dimethylallyl diphosphate. Positions 259, 260, 261, and 303 each coordinate isopentenyl diphosphate.

The protein belongs to the IspH family. It depends on [4Fe-4S] cluster as a cofactor.

It catalyses the reaction isopentenyl diphosphate + 2 oxidized [2Fe-2S]-[ferredoxin] + H2O = (2E)-4-hydroxy-3-methylbut-2-enyl diphosphate + 2 reduced [2Fe-2S]-[ferredoxin] + 2 H(+). It carries out the reaction dimethylallyl diphosphate + 2 oxidized [2Fe-2S]-[ferredoxin] + H2O = (2E)-4-hydroxy-3-methylbut-2-enyl diphosphate + 2 reduced [2Fe-2S]-[ferredoxin] + 2 H(+). It functions in the pathway isoprenoid biosynthesis; dimethylallyl diphosphate biosynthesis; dimethylallyl diphosphate from (2E)-4-hydroxy-3-methylbutenyl diphosphate: step 1/1. Its pathway is isoprenoid biosynthesis; isopentenyl diphosphate biosynthesis via DXP pathway; isopentenyl diphosphate from 1-deoxy-D-xylulose 5-phosphate: step 6/6. In terms of biological role, catalyzes the conversion of 1-hydroxy-2-methyl-2-(E)-butenyl 4-diphosphate (HMBPP) into a mixture of isopentenyl diphosphate (IPP) and dimethylallyl diphosphate (DMAPP). Acts in the terminal step of the DOXP/MEP pathway for isoprenoid precursor biosynthesis. In Anaplasma marginale (strain Florida), this protein is 4-hydroxy-3-methylbut-2-enyl diphosphate reductase.